Consider the following 668-residue polypeptide: Endoplasmic reticulum membrane-associated RNA degradation protein (668 aa).

Transmembrane regions (helical) follow at residues 378-398 and 575-595; these read LLAFSVVLLLRFVDEGLLSVF and VLSLILFLITLELVNVHAVCG.

The protein localises to the endoplasmic reticulum membrane. May play a role in neuronal migration during embryonic development. The sequence is that of Endoplasmic reticulum membrane-associated RNA degradation protein (ERMARD) from Macaca fascicularis (Crab-eating macaque).